The primary structure comprises 685 residues: Small ribosomal subunit protein mS39 (685 aa).

The transit peptide at 1 to 10 (MAAAAVAARR) directs the protein to the mitochondrion. Lys127 carries the N6-acetyllysine modification. 10 PPR repeats span residues 150 to 184 (IEDV…GTTV), 185 to 220 (SLET…ENLE), 254 to 288 (NARS…RLSA), 289 to 329 (DVYT…KVKP), 330 to 366 (NLQT…GIEP), 367 to 407 (SLAT…TFSP), 412 to 446 (DGRF…DNRK), 454 to 488 (RKVY…VFLP), 489 to 523 (HYQI…SHTF), and 572 to 606 (PANP…KKIP). Residues 663-685 (LGNLTELNSSDGESSSDSDSDDK) form a disordered region. The span at 676–685 (SSSDSDSDDK) shows a compositional bias: acidic residues.

Belongs to the mitochondrion-specific ribosomal protein mS39 family. In terms of assembly, component of the mitochondrial ribosome small subunit (28S) which comprises a 12S rRNA and about 30 distinct proteins. Associated with the 12S mitochondrial rRNA (12S mt-rRNA).

The protein localises to the mitochondrion. Functionally, mitochondrial RNA-binding protein that has a role in mitochondrial translation. The chain is Small ribosomal subunit protein mS39 (Ptcd3) from Mus musculus (Mouse).